The primary structure comprises 434 residues: CCA tRNA nucleotidyltransferase 1, mitochondrial (434 aa).

Residues 1–41 (MQSVLYPWHRQVLRCSWSRLCLLKRYLFTMKLQSPEFQSLF) constitute a mitochondrion transit peptide. Residues glycine 64 and arginine 67 each coordinate ATP. Residues glycine 64 and arginine 67 each coordinate CTP. Mg(2+)-binding residues include aspartate 77 and aspartate 79. Arginine 151, aspartate 194, arginine 197, arginine 200, and arginine 203 together coordinate ATP. Residues arginine 151, aspartate 194, arginine 197, arginine 200, and arginine 203 each coordinate CTP. Serine 400 bears the Phosphoserine mark. Lysine 402 bears the N6-acetyllysine mark.

Belongs to the tRNA nucleotidyltransferase/poly(A) polymerase family. As to quaternary structure, monomer, and homodimer. It depends on Mg(2+) as a cofactor.

It localises to the mitochondrion. The protein resides in the cytoplasm. It is found in the nucleus. The catalysed reaction is a tRNA precursor + 2 CTP + ATP = a tRNA with a 3' CCA end + 3 diphosphate. It catalyses the reaction a tRNA with a 3' CCA end + 2 CTP + ATP = a tRNA with a 3' CCACCA end + 3 diphosphate. Functionally, nucleotidyltransferase that catalyzes the addition and repair of the essential 3'-terminal CCA sequence in tRNAs, which is necessary for the attachment of amino acids to the 3' terminus of tRNA molecules, using CTP and ATP as substrates. tRNA 3'-terminal CCA addition is required both for tRNA processing and repair. Promotes tRNA repair and recycling downstream of the ribosome-associated quality control (RQC) pathway by mediating addition of the tRNA 3'-terminal CCA following cleavage by ANKZF1 and repair by ELAC1. Also involved in tRNA surveillance by mediating tandem CCA addition to generate a CCACCA at the 3' terminus of unstable tRNAs and tRNA-like transcripts. While stable tRNAs receive only 3'-terminal CCA, unstable tRNAs beginning with GG are marked with CCACCA and rapidly degraded. The structural flexibility of RNA controls the choice between CCA versus CCACCA addition: following the first CCA addition cycle, nucleotide-binding to the active site triggers a clockwise screw motion, producing torque on the RNA. This ejects stable RNAs, whereas unstable RNAs are refolded while bound to the enzyme and subjected to a second CCA catalytic cycle. The polypeptide is CCA tRNA nucleotidyltransferase 1, mitochondrial (Trnt1) (Mus musculus (Mouse)).